Reading from the N-terminus, the 727-residue chain is Bromodomain-containing protein C631.02 (727 aa).

2 disordered regions span residues 27–231 and 341–369; these read AATI…PPMT and TSYS…AAMY. Residues 56–68 show a composition bias toward acidic residues; that stretch reads ENDDGTLDLFGDS. Basic and acidic residues predominate over residues 69–78; the sequence is ELEKEQKGDN. The span at 102–114 shows a compositional bias: polar residues; that stretch reads PSSPTHPSVSNIT. Residues 128-150 show a composition bias toward basic and acidic residues; sequence EEEKSSESLDSHTHPPKRVRNED. Positions 153–177 are enriched in polar residues; the sequence is LTFSKTSPVSPSSLKDGASNTVTND. Serine 162 is subject to Phosphoserine. Basic and acidic residues predominate over residues 206–231; that stretch reads SKEHSSPHDETVKKEENDKDQYPPMT. In terms of domain architecture, Bromo 1 spans 229–335; the sequence is PMTKEQHKYI…ATFERQLKQL (107 aa). In terms of domain architecture, Bromo 2 spans 388-497; sequence RKDAAEMKFC…SIFQKLWANK (110 aa). The NET domain maps to 570–650; it reads RSLSVDIYPP…KGDEIGAEAL (81 aa). The disordered stretch occupies residues 699-727; the sequence is IAAYNTKSLGSDDSSSEDDGESSESSDSA. The segment covering 712-727 has biased composition (acidic residues); it reads SSSEDDGESSESSDSA.

It belongs to the BET family.

It is found in the nucleus. This is Bromodomain-containing protein C631.02 from Schizosaccharomyces pombe (strain 972 / ATCC 24843) (Fission yeast).